A 98-amino-acid polypeptide reads, in one-letter code: MSKQSFDFKRYKPEAPSGSRKRPLKKFKKPIRIKSEDQINYKNVSLINGFISQRAKILSRKVTKLTWKQQRLMSVAIKRARILSLLPFIVKTKFKKLY.

Residues 1 to 13 (MSKQSFDFKRYKP) are compositionally biased toward basic and acidic residues. A disordered region spans residues 1–26 (MSKQSFDFKRYKPEAPSGSRKRPLKK).

This sequence belongs to the bacterial ribosomal protein bS18 family. As to quaternary structure, part of the 30S ribosomal subunit.

It localises to the plastid. Its subcellular location is the chloroplast. The sequence is that of Small ribosomal subunit protein bS18c from Gnetum parvifolium (Small-leaved jointfir).